Here is a 315-residue protein sequence, read N- to C-terminus: Porphobilinogen deaminase (315 aa).

The residue at position 241 (cysteine 241) is an S-(dipyrrolylmethanemethyl)cysteine.

Belongs to the HMBS family. Monomer. Dipyrromethane serves as cofactor.

The enzyme catalyses 4 porphobilinogen + H2O = hydroxymethylbilane + 4 NH4(+). It participates in porphyrin-containing compound metabolism; protoporphyrin-IX biosynthesis; coproporphyrinogen-III from 5-aminolevulinate: step 2/4. In terms of biological role, tetrapolymerization of the monopyrrole PBG into the hydroxymethylbilane pre-uroporphyrinogen in several discrete steps. This chain is Porphobilinogen deaminase, found in Nitratidesulfovibrio vulgaris (strain ATCC 29579 / DSM 644 / CCUG 34227 / NCIMB 8303 / VKM B-1760 / Hildenborough) (Desulfovibrio vulgaris).